Here is a 215-residue protein sequence, read N- to C-terminus: Hibernation-associated plasma protein HP-27 (215 aa).

Positions 1 to 30 (MYEAGKRASFMGGAGIWILALSVLMHVVCS) are cleaved as a signal peptide. The interval 34–79 (GNPESCNVPGPQGPPGMRGPPGTPGKPGPPGWNGFPGLPGPPGPPG) is disordered. Residues 43-81 (GPQGPPGMRGPPGTPGKPGPPGWNGFPGLPGPPGPPGMT) enclose the Collagen-like domain. Pro residues predominate over residues 44-63 (PQGPPGMRGPPGTPGKPGPP). Positions 85 to 215 (HSKGTSAFAV…VFSGFLIHEN (131 aa)) constitute a C1q domain. N-linked (GlcNAc...) asparagine glycosylation is present at Asn155.

As to expression, plasma; synthesized in the liver.

Its subcellular location is the secreted. Plasma proteins HP-20, HP-25, HP-27 and HP-55 form a 140 kDa complex via disulfide bonds in the plasma and are hibernation specific. This chain is Hibernation-associated plasma protein HP-27, found in Tamias sibiricus (Siberian chipmunk).